The chain runs to 602 residues: DNA mismatch repair protein MutL (602 aa).

This sequence belongs to the DNA mismatch repair MutL/HexB family.

Its function is as follows. This protein is involved in the repair of mismatches in DNA. It is required for dam-dependent methyl-directed DNA mismatch repair. May act as a 'molecular matchmaker', a protein that promotes the formation of a stable complex between two or more DNA-binding proteins in an ATP-dependent manner without itself being part of a final effector complex. In Baumannia cicadellinicola subsp. Homalodisca coagulata, this protein is DNA mismatch repair protein MutL.